A 1444-amino-acid polypeptide reads, in one-letter code: Adhesin P1 (1444 aa).

The first 30 residues, 1-30, serve as a signal peptide directing secretion; it reads MHQPKKRLAKKSWAFLTAALTLGVITGVGG. 3 disordered regions span residues 231 to 283, 845 to 885, and 927 to 949; these read QSSF…EVER, IPFE…ALPN, and GDSN…TNEG. Residues 240-257 show a composition bias toward basic and acidic residues; the sequence is LQKDSPVKDSSKQGEKLS. The segment covering 258-272 has biased composition (low complexity); that stretch reads ETTASSMSSGMATST. 2 stretches are compositionally biased toward polar residues: residues 851–860 and 868–878; these read KPSNNSTPFD and VTPSGGSSKPT. The span at 933–946 shows a compositional bias: basic and acidic residues; that stretch reads FNKDSEQKWDKTET. A helical membrane pass occupies residues 1353–1373; that stretch reads VLPLIVTVPIVVIILSVTLGL. The interval 1419–1444 is disordered; sequence NAPKKLKQATPTKPTPKTPPKPPVKQ. The span at 1431–1444 shows a compositional bias: pro residues; sequence KPTPKTPPKPPVKQ.

This sequence belongs to the adhesin P1 family.

It is found in the cell membrane. Functionally, the protein is the major adhesin mediating the attachment of this mycoplasma to the ciliated epithelium. The polypeptide is Adhesin P1 (mgpA) (Mycoplasma genitalium (strain ATCC 33530 / DSM 19775 / NCTC 10195 / G37) (Mycoplasmoides genitalium)).